Reading from the N-terminus, the 62-residue chain is Prokaryotic ubiquitin-like protein Pup (62 aa).

Residues 1-29 are disordered; it reads MSQQSLNAPGPGAEDGNDPEAVTGGQTFA. The interval 21–56 is ARC ATPase binding; the sequence is AVTGGQTFASAQAADDLLDEIDSVLESNAETFVRSF. A Deamidated glutamine modification is found at Gln62. Gln62 participates in a covalent cross-link: Isoglutamyl lysine isopeptide (Gln-Lys) (interchain with K-? in acceptor proteins).

The protein belongs to the prokaryotic ubiquitin-like protein family. Strongly interacts with the proteasome-associated ATPase ARC through a hydrophobic interface; the interacting region of Pup lies in its C-terminal half. There is one Pup binding site per ARC hexamer ring. Is modified by deamidation of its C-terminal glutamine to glutamate by the deamidase Dop, a prerequisite to the subsequent pupylation process.

The protein operates within protein degradation; proteasomal Pup-dependent pathway. Functionally, protein modifier that is covalently attached to lysine residues of substrate proteins, thereby targeting them for proteasomal degradation. The tagging system is termed pupylation. This chain is Prokaryotic ubiquitin-like protein Pup, found in Brachybacterium faecium (strain ATCC 43885 / DSM 4810 / JCM 11609 / LMG 19847 / NBRC 14762 / NCIMB 9860 / 6-10).